Here is a 151-residue protein sequence, read N- to C-terminus: D-aminoacyl-tRNA deacylase (151 aa).

The short motif at 137–138 (GP) is the Gly-cisPro motif, important for rejection of L-amino acids element.

Belongs to the DTD family. As to quaternary structure, homodimer.

The protein resides in the cytoplasm. The enzyme catalyses glycyl-tRNA(Ala) + H2O = tRNA(Ala) + glycine + H(+). It catalyses the reaction a D-aminoacyl-tRNA + H2O = a tRNA + a D-alpha-amino acid + H(+). An aminoacyl-tRNA editing enzyme that deacylates mischarged D-aminoacyl-tRNAs. Also deacylates mischarged glycyl-tRNA(Ala), protecting cells against glycine mischarging by AlaRS. Acts via tRNA-based rather than protein-based catalysis; rejects L-amino acids rather than detecting D-amino acids in the active site. By recycling D-aminoacyl-tRNA to D-amino acids and free tRNA molecules, this enzyme counteracts the toxicity associated with the formation of D-aminoacyl-tRNA entities in vivo and helps enforce protein L-homochirality. The chain is D-aminoacyl-tRNA deacylase from Acaryochloris marina (strain MBIC 11017).